The following is a 466-amino-acid chain: Myocardial zonula adherens protein (466 aa).

The span at Met-1–Leu-10 shows a compositional bias: polar residues. Positions Met-1–Gly-20 are cleaved as a signal peptide. The disordered stretch occupies residues Met-1 to Ser-23. 2 coiled-coil regions span residues Gln-96–Gln-142 and Leu-174–Lys-418. The short motif at Arg-424–Glu-425 is the Required for DYNLL1-binding element.

Belongs to the MYZAP family. As to quaternary structure, interacts with DSP, MPRIP and TJP1/ZO1. Interaction with MPRIP inhibits the activation of transcription factor SRF. Interacts with GRIN1. Interacts with DYNLL1. Detected in heart, liver, skeletal muscle, placenta, small intestine, lung, prostate and testis. Expressed in arrector pili muscle (at protein level).

The protein localises to the cytoplasm. It is found in the cytoskeleton. The protein resides in the cell membrane. Its subcellular location is the myofibril. It localises to the sarcomere. The protein localises to the i band. It is found in the z line. The protein resides in the cell junction. Plays a role in cellular signaling via Rho-related GTP-binding proteins and subsequent activation of transcription factor SRF. Targets TJP1 to cell junctions. In cortical neurons, may play a role in glutaminergic signal transduction through interaction with the NMDA receptor subunit GRIN1. The sequence is that of Myocardial zonula adherens protein (MYZAP) from Homo sapiens (Human).